A 500-amino-acid polypeptide reads, in one-letter code: L-arabinose isomerase (500 aa).

Glutamate 306, glutamate 333, histidine 349, and histidine 448 together coordinate Mn(2+).

The protein belongs to the arabinose isomerase family. The cofactor is Mn(2+).

It carries out the reaction beta-L-arabinopyranose = L-ribulose. Its pathway is carbohydrate degradation; L-arabinose degradation via L-ribulose; D-xylulose 5-phosphate from L-arabinose (bacterial route): step 1/3. Its function is as follows. Catalyzes the conversion of L-arabinose to L-ribulose. The sequence is that of L-arabinose isomerase from Shewanella baltica (strain OS223).